Consider the following 183-residue polypeptide: NADH-ubiquinone oxidoreductase chain 5 (183 aa).

4 helical membrane-spanning segments follow: residues 7-27 (FMCY…GDNS), 30-50 (LFLG…FWFT), 111-131 (AITL…AQIG), and 144-164 (TPVS…FMIA).

It belongs to the complex I subunit 5 family.

It is found in the mitochondrion inner membrane. It carries out the reaction a ubiquinone + NADH + 5 H(+)(in) = a ubiquinol + NAD(+) + 4 H(+)(out). In terms of biological role, core subunit of the mitochondrial membrane respiratory chain NADH dehydrogenase (Complex I) that is believed to belong to the minimal assembly required for catalysis. Complex I functions in the transfer of electrons from NADH to the respiratory chain. The immediate electron acceptor for the enzyme is believed to be ubiquinone. This Pisum sativum (Garden pea) protein is NADH-ubiquinone oxidoreductase chain 5 (NDH5).